A 180-amino-acid polypeptide reads, in one-letter code: UDP-4-amino-4,6-dideoxy-N-acetyl-beta-L-altrosamine N-acetyltransferase (180 aa).

In terms of domain architecture, N-acetyltransferase spans 13 to 169 (IDFTNLNDGE…IDVLLYYKDK (157 aa)).

The enzyme catalyses UDP-4-amino-4,6-dideoxy-N-acetyl-beta-L-altrosamine + acetyl-CoA = UDP-2,4-diacetamido-2,4,6-trideoxy-beta-L-altrose + CoA + H(+). Its function is as follows. Catalyzes the third step in the biosynthesis of pseudaminic acid, a sialic-acid-like sugar that is used to modify flagellin. Mediates N-4 acetylation of UDP-4-amino-4,6-dideoxy-beta-L-AltNAc to form UDP-2,4-diacetamido-2,4,6-trideoxy-beta-L-altropyranose. This chain is UDP-4-amino-4,6-dideoxy-N-acetyl-beta-L-altrosamine N-acetyltransferase (pseH), found in Helicobacter pylori (strain ATCC 700392 / 26695) (Campylobacter pylori).